A 171-amino-acid chain; its full sequence is Co-chaperone protein HscB (171 aa).

Residues 2 to 74 enclose the J domain; the sequence is DYFTLFGLPA…LMRAEYLLSL (73 aa).

Belongs to the HscB family. In terms of assembly, interacts with HscA and stimulates its ATPase activity. Interacts with IscU.

Its function is as follows. Co-chaperone involved in the maturation of iron-sulfur cluster-containing proteins. Seems to help targeting proteins to be folded toward HscA. This chain is Co-chaperone protein HscB, found in Shigella flexneri serotype 5b (strain 8401).